Here is a 142-residue protein sequence, read N- to C-terminus: Hemoglobin subunit alpha-1 (142 aa).

S1 is subject to N-acetylserine. Positions 1 to 142 constitute a Globin domain; that stretch reads SLSVKDKAAV…VALALAERYR (142 aa). O2 is bound at residue H59. Residue H88 participates in heme b binding.

Belongs to the globin family. In terms of assembly, hb 1 is a heterotetramer of two alpha-1 and two beta-1 chains. As to expression, red blood cells.

Involved in oxygen transport from gills to the various peripheral tissues. In Gobionotothen gibberifrons (Humped rockcod), this protein is Hemoglobin subunit alpha-1 (hba1).